The sequence spans 130 residues: Small ribosomal subunit protein uS8 (130 aa).

Belongs to the universal ribosomal protein uS8 family. As to quaternary structure, part of the 30S ribosomal subunit.

In terms of biological role, one of the primary rRNA binding proteins, it binds directly to 16S rRNA central domain where it helps coordinate assembly of the platform of the 30S subunit. In Methanoculleus marisnigri (strain ATCC 35101 / DSM 1498 / JR1), this protein is Small ribosomal subunit protein uS8.